Here is an 828-residue protein sequence, read N- to C-terminus: Vacuolar transporter chaperone complex subunit 2 (828 aa).

Positions 1–146 (MLFGVKLANE…PKYPSVKSLL (146 aa)) constitute an SPX domain. At 1–693 (MLFGVKLANE…EAKVWLANER (693 aa)) the chain is on the cytoplasmic side. Positions 127–134 (KIVKKHDK) are important for inositol polyphosphate binding. 7 positions are modified to phosphoserine: S182, S187, S196, S264, S583, S615, and S616. A disordered region spans residues 580-636 (RRLSNLKEPQHQAAVPVSQEENERITSQGDLEADGSSDEETEQEPHSKRSKKVRRRK). Acidic residues predominate over residues 610–621 (LEADGSSDEETE). The residue at position 620 (T620) is a Phosphothreonine. The residue at position 626 (S626) is a Phosphoserine. Positions 627-636 (KRSKKVRRRK) are enriched in basic residues. The residue at position 657 (S657) is a Phosphoserine. A helical transmembrane segment spans residues 694 to 716 (TFNRWLSVTSLLSVLTFSIYNSV). Topologically, residues 717 to 727 (KKAEYPTLANY) are vacuolar. A helical membrane pass occupies residues 728 to 748 (MAYVYFGLTIFCALWSYSIYM). Residues 749-766 (KRVDIIQQRSGQHLDAPL) are Cytoplasmic-facing. Residues 767-787 (GPVLVSIVLFVTLVVNFVMAF) form a helical membrane-spanning segment. Topologically, residues 788–828 (RNAAKSRQELQIQNLEVPERIPEVLRPLQNYLFKLMGPSSD) are vacuolar.

The protein belongs to the VTC2/3 family. As to quaternary structure, the VTC core complex is an integral membrane heterooligomer composed of the catalytic subunit VTC4 and the accessory subunits VTC1, VTC2 and VTC3. The complex exists in 2 different sub-complexes: VTC1-VTC2-VCT4 and VCT1-VTC3-VTC4. The VCT1-VTC3-VTC4 subcomplex is mostly found on the vacuolar membrane. The VTC1-VTC2-VCT4 subcomplex is observed in the cell periphery, probably ER and nuclear envelope, but localizes to the vacuole under phosphate starvation. Each subunit contains 3 transmembrane helices. VTC1 is a small membrane protein without hydrophilic domain. VTC2, VTC3 and VTC4 are related and have 2 hydrophilic domains that face the cytosol, an N-terminal SPX domain and the central core domain. The central core in VTC4 is the catalytic domain, with the essential catalytic lysine replaced by isoleucine and leucine in VTC2 and VTC3, respectively. The core complex associates with the accessory subunit VTC5. The complex interacts with the v-SNARE NYV1 and with the V(0) subunit of V-ATPase VPH1.

The protein localises to the vacuole membrane. It is found in the cytoplasm. It localises to the cell cortex. Its subcellular location is the endoplasmic reticulum membrane. The protein resides in the cytoplasmic vesicle. The protein localises to the autophagosome membrane. Functionally, accessory subunit of the vacuolar transporter chaperone (VTC) complex. The VTC complex acts as a vacuolar polyphosphate polymerase that catalyzes the synthesis of inorganic polyphosphate (polyP) via transfer of phosphate from ATP to a growing polyP chain, releasing ADP. VTC exposes its catalytic domain VTC4 to the cytosol, where the growing polyP chain winds through a tunnel-shaped pocket, integrating cytoplasmic polymer synthesis with polyP membrane translocation. The VTC complex carries 9 vacuolar transmembrane domains, which are likely to constitute the translocation channel into the organelle lumen. PolyP synthesis is tightly coupled to its transport into the vacuole lumen, in order to avoid otherwise toxic intermediates in the cytosol, and it depends on the proton gradient across the membrane, formed by V-ATPase. Binds inositol hexakisphosphate (Ins6P) and similar inositol polyphosphates, such as 5-diphospho-inositol pentakisphosphate (5-InsP7); these are important intracellular signaling molecules. Inositol polyphosphate binding promotes vacuolar polyphosphate synthesis. The VTC complex also plays a role in vacuolar membrane fusion. Required for SEC18/NSF activity in SNARE priming, membrane binding of LMA1 and V(0) trans-complex formation. The protein is Vacuolar transporter chaperone complex subunit 2 of Saccharomyces cerevisiae (strain ATCC 204508 / S288c) (Baker's yeast).